We begin with the raw amino-acid sequence, 255 residues long: Coiled-coil domain-containing 92B (255 aa).

A coiled-coil region spans residues 28–90 (LRDLHLEILR…AAANAELRRE (63 aa)). Positions 149–255 (QRLQAPRPGP…SQPSAPGDPE (107 aa)) are disordered. The segment covering 166–177 (PRRRALRARRPP) has biased composition (basic residues). Over residues 242-255 (QPAPSQPSAPGDPE) the composition is skewed to pro residues.

This chain is Coiled-coil domain-containing 92B, found in Homo sapiens (Human).